A 1705-amino-acid polypeptide reads, in one-letter code: Receptor-type tyrosine-protein phosphatase V (1705 aa).

The first 18 residues, 1-18 (MRPLILLAALLWLQDSLA), serve as a signal peptide directing secretion. Residues 19 to 1077 (QEDVCSSLDG…QASISLVAMP (1059 aa)) lie on the Extracellular side of the membrane. Residues 24–44 (SSLDGSPDRQGGGPPLSVSVT) form a disordered region. Fibronectin type-III domains are found at residues 37–129 (PPLS…TAPT), 130–222 (VVRG…VPPD), 218–305 (PVPP…EWTY), 306–388 (PSYP…SIWL), 393–454 (ARPM…HYRV), 475–569 (PPQS…APPT), 565–654 (PAPP…TGWT), 655–749 (PPSA…TPNE), 744–831 (PLTP…VLSV), and 832–926 (EPGP…SAEV). 15 N-linked (GlcNAc...) asparagine glycosylation sites follow: Asn-74, Asn-89, Asn-117, Asn-174, Asn-239, Asn-259, Asn-299, Asn-345, Asn-431, Asn-551, Asn-570, Asn-620, Asn-649, Asn-663, and Asn-737. N-linked (GlcNAc...) asparagine glycans are attached at residues Asn-851, Asn-882, Asn-970, and Asn-982. The chain crosses the membrane as a helical span at residues 1078–1100 (LTVMMGTVVGCIIIVCAVLCLLC). Residues 1101–1705 (RRGLKGPRSE…LRNRLPRARK (605 aa)) are Cytoplasmic-facing. 2 consecutive Tyrosine-protein phosphatase domains span residues 1150-1409 (FFQE…LLNK) and 1427-1695 (NFAQ…LNSA). Residues Asp-1316, 1350 to 1356 (CSAGVGR), and Gln-1394 each bind substrate. The active-site Phosphocysteine intermediate is the Cys-1350.

The protein belongs to the protein-tyrosine phosphatase family. Receptor class 3 subfamily.

The protein resides in the membrane. It carries out the reaction O-phospho-L-tyrosyl-[protein] + H2O = L-tyrosyl-[protein] + phosphate. Functionally, protein tyrosine phosphatase that acts as a regulator of energy metabolism by mediating dephosphorylation of insulin receptor (Insr). Prevents decarboxylation of osteocalcin (Bglap and Bglap2) via an indirect mechanism: dephosphorylation of insulin receptor prevents insulin signaling-dependent decarboxylation of osteocalcin, preventing the hormone activity of osteocalcin. May play a role in the maintenance of pluripotency. This chain is Receptor-type tyrosine-protein phosphatase V (Ptprv), found in Mus musculus (Mouse).